We begin with the raw amino-acid sequence, 938 residues long: Ubiquitin carboxyl-terminal hydrolase Usp2 (938 aa).

Disordered stretches follow at residues 1-53 (MMLD…KVGA), 91-117 (KVKT…NTSR), 130-254 (FNGN…ISTT), 273-297 (EQNQ…HRYP), 360-410 (LSGQ…NLQQ), and 500-610 (KDAT…EKSE). A compositionally biased stretch (low complexity) spans 22–36 (STTKTSSVVATSASS). Low complexity-rich tracts occupy residues 137 to 158 (TTTN…NTSN), 167 to 177 (STTATATSTST), 198 to 227 (MNGH…QRQQ), and 275 to 289 (NQVQ…PSSS). A compositionally biased stretch (polar residues) spans 392–410 (ASRSNHGSQAGGSSSNLQQ). Low complexity-rich tracts occupy residues 502–555 (ATTA…TARS) and 574–583 (TSRSSIGTSS). The segment covering 592–610 (HNSDDGYKTASSSRDEKSE) has biased composition (basic and acidic residues). The USP domain occupies 613-938 (CGLRNIGNTC…SAYILFYERT (326 aa)). The active-site Nucleophile is the Cys-622. Positions 765, 768, 814, and 817 each coordinate Zn(2+). His-895 acts as the Proton acceptor in catalysis.

This sequence belongs to the peptidase C19 family. Interacts (via N-terminus) with imd (via N-terminus). Interacts with Rpt6.

The catalysed reaction is Thiol-dependent hydrolysis of ester, thioester, amide, peptide and isopeptide bonds formed by the C-terminal Gly of ubiquitin (a 76-residue protein attached to proteins as an intracellular targeting signal).. Functionally, hydrolase that deubiquitinates polyubiquitinated target proteins. Required for preventing the activation of the Toll signaling cascades under unchallenged conditions. Essential for bodily calcium homeostasis. In terms of biological role, required for preventing the activation of the immune deficiency (Imd) signaling cascade under unchallenged conditions. Regulates the Imd pathway by specifically removing 'Lys-48'-linked ubiquitin from imd. Also promotes imd degradation probably by binding to imd and enhancing its association with the proteasome. The sequence is that of Ubiquitin carboxyl-terminal hydrolase Usp2 from Drosophila melanogaster (Fruit fly).